The primary structure comprises 349 residues: Bifunctional nitrilase/nitrile hydratase NIT4A (349 aa).

The CN hydrolase domain occupies 29–301 (VRATVVQAST…EALISADLDL (273 aa)). Residue Glu-69 is the Proton acceptor of the active site. The active-site Proton donor is the Lys-156. Catalysis depends on Cys-190, which acts as the Nucleophile.

This sequence belongs to the carbon-nitrogen hydrolase superfamily. Nitrilase family. In terms of tissue distribution, expressed in roots, stems, cotyledons, leaves and flowers.

It is found in the cell membrane. The catalysed reaction is a nitrile + 2 H2O = a carboxylate + NH4(+). It carries out the reaction 3-cyano-L-alanine + 2 H2O = L-aspartate + NH4(+). The enzyme catalyses L-asparagine = 3-cyano-L-alanine + H2O. Highly specific for beta-cyano-L-alanine (Ala(CN)). Low activity with 3-phenylpropionitrile (PPN). Not associated with auxin production but may be involved in cyanide detoxification. This chain is Bifunctional nitrilase/nitrile hydratase NIT4A (NIT4A), found in Nicotiana tabacum (Common tobacco).